The primary structure comprises 372 residues: D-alanine--D-alanine ligase (372 aa).

An ATP-grasp domain is found at 145–349; it reads KTVLRAGGIP…CPNLLDQLIE (205 aa). 176–231 serves as a coordination point for ATP; sequence DRWGTSELFVKAVSLGSSVATLPVKTETEFTKAVKEVFRYDDRLMVEPRIRGREIE. Residues aspartate 303, glutamate 316, and asparagine 318 each contribute to the Mg(2+) site.

Belongs to the D-alanine--D-alanine ligase family. Mg(2+) is required as a cofactor. It depends on Mn(2+) as a cofactor.

It is found in the cytoplasm. The catalysed reaction is 2 D-alanine + ATP = D-alanyl-D-alanine + ADP + phosphate + H(+). It participates in cell wall biogenesis; peptidoglycan biosynthesis. Its function is as follows. Cell wall formation. This chain is D-alanine--D-alanine ligase, found in Coxiella burnetii (strain CbuK_Q154) (Coxiella burnetii (strain Q154)).